Reading from the N-terminus, the 456-residue chain is 3-isopropylmalate dehydratase large subunit (456 aa).

The [4Fe-4S] cluster site is built by Cys-336, Cys-396, and Cys-399.

Belongs to the aconitase/IPM isomerase family. LeuC type 1 subfamily. In terms of assembly, heterodimer of LeuC and LeuD. Requires [4Fe-4S] cluster as cofactor.

It catalyses the reaction (2R,3S)-3-isopropylmalate = (2S)-2-isopropylmalate. The protein operates within amino-acid biosynthesis; L-leucine biosynthesis; L-leucine from 3-methyl-2-oxobutanoate: step 2/4. Its function is as follows. Catalyzes the isomerization between 2-isopropylmalate and 3-isopropylmalate, via the formation of 2-isopropylmaleate. This Staphylococcus haemolyticus (strain JCSC1435) protein is 3-isopropylmalate dehydratase large subunit.